Here is a 117-residue protein sequence, read N- to C-terminus: Mini-circle uncharacterized 12.9 kDa protein (117 aa).

In Streptomyces coelicolor (strain ATCC BAA-471 / A3(2) / M145), this protein is Mini-circle uncharacterized 12.9 kDa protein.